The sequence spans 91 residues: LYR motif-containing protein 4 (91 aa).

2 residues coordinate pantetheine 4'-phosphate: R6 and K44. K47 is subject to N6-succinyllysine.

It belongs to the complex I LYR family. As to quaternary structure, homodimer. Component of the mitochondrial core iron-sulfur cluster (ISC) complex composed of NFS1, LYRM4, NDUFAB1, ISCU, FXN, and FDX2; this complex is a heterohexamer containing two copies of each monomer. Component of the cyteine desulfurase complex composed of NFS1, LYRM4 and NDUFAB1; this complex contributes to the stability and cysteine desulfurase activity of NFS1. Interacts with FXN; this interaction is nickel-dependent. Interacts with the cytoplasmic form of NFS1; the complex increases the stability of NFS1. Forms a complex with the cytoplasmic form of NFS1; this complex increases the stability and cysteine desulfurase activity of NFS1. Interacts with NFS1.

It localises to the mitochondrion. The protein localises to the nucleus. The protein operates within cofactor biosynthesis; iron-sulfur cluster biosynthesis. Its function is as follows. Stabilizing factor, of the core iron-sulfur cluster (ISC) assembly complex, that regulates, in association with NDUFAB1, the stability and the cysteine desulfurase activity of NFS1 and participates in the [2Fe-2S] clusters assembly on the scaffolding protein ISCU. The core iron-sulfur cluster (ISC) assembly complex is involved in the de novo synthesis of a [2Fe-2S] cluster, the first step of the mitochondrial iron-sulfur protein biogenesis. This process is initiated by the cysteine desulfurase complex (NFS1:LYRM4:NDUFAB1) that produces persulfide which is delivered on the scaffold protein ISCU in a FXN-dependent manner. Then this complex is stabilized by FDX2 which provides reducing equivalents to accomplish the [2Fe-2S] cluster assembly. Finally, the [2Fe-2S] cluster is transferred from ISCU to chaperone proteins, including HSCB, HSPA9 and GLRX5. May also participates in the iron-sulfur protein biogenesis in the cytoplasm through its interaction with the cytoplasmic form of NFS1. This chain is LYR motif-containing protein 4, found in Bos taurus (Bovine).